The following is a 151-amino-acid chain: Copper transporter 2 (151 aa).

Helical transmembrane passes span 42 to 62 and 97 to 117; these read GARG…AVLL and VAYL…LAIV.

This sequence belongs to the copper transporter (Ctr) (TC 1.A.56) family. SLC31A subfamily. Self-interacts. Interacts with SWEET11 and COPT1.

The protein localises to the cell membrane. Functionally, involved in the transport of copper, in cooperation with SWEET11 and COPT1. Contributes to the removal of copper (Cu) from xylem, and thus to the sensitivity toward bacterial pathogens such as X.oryzae pv. oryzae (Xoo). This chain is Copper transporter 2 (COPT2), found in Oryza sativa subsp. japonica (Rice).